A 320-amino-acid polypeptide reads, in one-letter code: Methionyl-tRNA formyltransferase (320 aa).

111–114 contacts (6S)-5,6,7,8-tetrahydrofolate; it reads SLLP.

Belongs to the Fmt family.

The catalysed reaction is L-methionyl-tRNA(fMet) + (6R)-10-formyltetrahydrofolate = N-formyl-L-methionyl-tRNA(fMet) + (6S)-5,6,7,8-tetrahydrofolate + H(+). Attaches a formyl group to the free amino group of methionyl-tRNA(fMet). The formyl group appears to play a dual role in the initiator identity of N-formylmethionyl-tRNA by promoting its recognition by IF2 and preventing the misappropriation of this tRNA by the elongation apparatus. The polypeptide is Methionyl-tRNA formyltransferase (Methylacidiphilum infernorum (isolate V4) (Methylokorus infernorum (strain V4))).